The sequence spans 536 residues: CTP synthase (536 aa).

The tract at residues 1–267 (MTKFIFVTGG…DDIVIKRLQL (267 aa)) is amidoligase domain. A CTP-binding site is contributed by Ser13. Ser13 provides a ligand contact to UTP. 14-19 (SLGKGI) contacts ATP. Tyr54 provides a ligand contact to L-glutamine. ATP is bound at residue Asp71. Mg(2+) contacts are provided by Asp71 and Glu141. CTP contacts are provided by residues 148–150 (DIE), 188–193 (KTKPTQ), and Lys224. Residues 188–193 (KTKPTQ) and Lys224 contribute to the UTP site. 240–242 (RDA) provides a ligand contact to ATP. Positions 293-535 (TIGLVGKYVS…IEASLKYQQN (243 aa)) constitute a Glutamine amidotransferase type-1 domain. Position 355 (Gly355) interacts with L-glutamine. Catalysis depends on Cys382, which acts as the Nucleophile; for glutamine hydrolysis. L-glutamine-binding positions include 383–386 (LGMQ), Glu406, and Arg463. Catalysis depends on residues His508 and Glu510.

The protein belongs to the CTP synthase family. In terms of assembly, homotetramer.

The catalysed reaction is UTP + L-glutamine + ATP + H2O = CTP + L-glutamate + ADP + phosphate + 2 H(+). It carries out the reaction L-glutamine + H2O = L-glutamate + NH4(+). The enzyme catalyses UTP + NH4(+) + ATP = CTP + ADP + phosphate + 2 H(+). It participates in pyrimidine metabolism; CTP biosynthesis via de novo pathway; CTP from UDP: step 2/2. Its activity is regulated as follows. Allosterically activated by GTP, when glutamine is the substrate; GTP has no effect on the reaction when ammonia is the substrate. The allosteric effector GTP functions by stabilizing the protein conformation that binds the tetrahedral intermediate(s) formed during glutamine hydrolysis. Inhibited by the product CTP, via allosteric rather than competitive inhibition. Functionally, catalyzes the ATP-dependent amination of UTP to CTP with either L-glutamine or ammonia as the source of nitrogen. Regulates intracellular CTP levels through interactions with the four ribonucleotide triphosphates. The chain is CTP synthase from Staphylococcus aureus (strain NCTC 8325 / PS 47).